Reading from the N-terminus, the 708-residue chain is Tryptophan synthase (708 aa).

The segment at 1–305 (MEGIKQTFQR…EADIDAQLAA (305 aa)) is tryptophan synthase alpha chain. Active-site proton acceptor residues include Glu49 and Asp60. The tryptophan synthase beta chain stretch occupies residues 306–708 (LHGTIPKRFG…GPKIGWDLRF (403 aa)). The residue at position 392 (Lys392) is an N6-(pyridoxal phosphate)lysine.

The protein in the N-terminal section; belongs to the TrpA family. This sequence in the C-terminal section; belongs to the TrpB family. Pyridoxal 5'-phosphate is required as a cofactor.

The catalysed reaction is (1S,2R)-1-C-(indol-3-yl)glycerol 3-phosphate + L-serine = D-glyceraldehyde 3-phosphate + L-tryptophan + H2O. Its pathway is amino-acid biosynthesis; L-tryptophan biosynthesis; L-tryptophan from chorismate: step 5/5. The sequence is that of Tryptophan synthase (trp-3) from Neurospora crassa (strain ATCC 24698 / 74-OR23-1A / CBS 708.71 / DSM 1257 / FGSC 987).